A 266-amino-acid polypeptide reads, in one-letter code: MVKQMFRALVALLLTLPVWLYAAPRVITLSPANTELAFAAGITPVGVSSYSDYPPEAQKIEQVSTWQGMNLERIVAMKPDLVVAWRGGNAERQVNQLTSLGIKVMWVDAVSIEQIADTLRQLAAWSPQPEKAQQAAQTLLNEYAALNAEYAGKAKKRVFLQFGMNPLFTSGKGSIQHQVLTTCGGENVFADSRVPWPQVSREQVLARHPQAIIVAGKAGEILKIEQYWGNLLKIPVIPLNSDWFERASPRIILAAKQLCNALSQVN.

The signal sequence occupies residues 1–22 (MVKQMFRALVALLLTLPVWLYA). The Fe/B12 periplasmic-binding domain maps to 25-266 (RVITLSPANT…QLCNALSQVN (242 aa)). Residues tyrosine 50 and 242–246 (DWFER) each bind cyanocob(III)alamin. Cysteines 183 and 259 form a disulfide.

Belongs to the BtuF family. In terms of assembly, the complex is composed of two ATP-binding proteins (BtuD), two transmembrane proteins (BtuC) and a solute-binding protein (BtuF).

Its subcellular location is the periplasm. In terms of biological role, part of the ABC transporter complex BtuCDF involved in vitamin B12 import. Binds vitamin B12 and delivers it to the periplasmic surface of BtuC. This is Vitamin B12-binding protein from Salmonella choleraesuis (strain SC-B67).